Consider the following 400-residue polypeptide: Enoyl-[acyl-carrier-protein] reductase [NADH] (400 aa).

NAD(+) contacts are provided by residues 48–53 (GSSSGY), 74–75 (FE), 111–112 (DA), and 139–140 (LA). Tyr-225 is a substrate binding site. The active-site Proton donor is Tyr-235. NAD(+)-binding positions include Lys-244 and 273 to 275 (VVT).

The protein belongs to the TER reductase family. In terms of assembly, monomer.

It carries out the reaction a 2,3-saturated acyl-[ACP] + NAD(+) = a (2E)-enoyl-[ACP] + NADH + H(+). It participates in lipid metabolism; fatty acid biosynthesis. Involved in the final reduction of the elongation cycle of fatty acid synthesis (FAS II). Catalyzes the reduction of a carbon-carbon double bond in an enoyl moiety that is covalently linked to an acyl carrier protein (ACP). The sequence is that of Enoyl-[acyl-carrier-protein] reductase [NADH] from Shewanella baltica (strain OS185).